A 354-amino-acid polypeptide reads, in one-letter code: Galectin-9 (354 aa).

2 Galectin domains span residues 17-147 and 226-354; these read FTGI…INFQ and FFTS…HVQT. A beta-D-galactoside-binding positions include Asn-47, His-60, Arg-64, Asn-74, 81–87, His-266, Arg-270, Thr-280, and 286–292; these read WGPEERK and WGPEERS.

In terms of tissue distribution, the isoform Long is expressed exclusively in the small intestine.

The protein resides in the cytoplasm. It is found in the nucleus. Its subcellular location is the secreted. Binds galactosides. Has high affinity for the Forssman pentasaccharide. Ligand for HAVCR2/TIM3. Binding to HAVCR2 induces T-helper type 1 lymphocyte (Th1) death. Also stimulates bactericidal activity in infected macrophages by causing macrophage activation and IL1B secretion which restricts intracellular bacterial growth. Ligand for P4HB; the interaction retains P4HB at the cell surface of Th2 T helper cells, increasing disulfide reductase activity at the plasma membrane, altering the plasma membrane redox state and enhancing cell migration. Ligand for CD44; the interaction enhances binding of SMAD3 to the FOXP3 promoter, leading to up-regulation of FOXP3 expression and increased induced regulatory T (iTreg) cell stability and suppressive function. Promotes ability of mesenchymal stromal cells to suppress T-cell proliferation. Expands regulatory T-cells and induces cytotoxic T-cell apoptosis following virus infection. Activates ERK1/2 phosphorylation inducing cytokine (IL-6, IL-8, IL-12) and chemokine (CCL2) production in mast and dendritic cells. Inhibits degranulation and induces apoptosis of mast cells. Induces maturation and migration of dendritic cells. Inhibits natural killer (NK) cell function. Can transform NK cell phenotype from peripheral to decidual during pregnancy. Astrocyte derived galectin-9 enhances microglial TNF production. May play a role in thymocyte-epithelial interactions relevant to the biology of the thymus. May provide the molecular basis for urate flux across cell membranes, allowing urate that is formed during purine metabolism to efflux from cells and serving as an electrogenic transporter that plays an important role in renal and gastrointestinal urate excretion. Highly selective to the anion urate. The protein is Galectin-9 (Lgals9) of Rattus norvegicus (Rat).